A 247-amino-acid chain; its full sequence is NAD(P)H-quinone oxidoreductase subunit K, chloroplastic (247 aa).

Residues Cys61, Cys62, Cys126, and Cys157 each coordinate [4Fe-4S] cluster.

Belongs to the complex I 20 kDa subunit family. NDH is composed of at least 16 different subunits, 5 of which are encoded in the nucleus. [4Fe-4S] cluster serves as cofactor.

The protein resides in the plastid. It localises to the chloroplast thylakoid membrane. It catalyses the reaction a plastoquinone + NADH + (n+1) H(+)(in) = a plastoquinol + NAD(+) + n H(+)(out). It carries out the reaction a plastoquinone + NADPH + (n+1) H(+)(in) = a plastoquinol + NADP(+) + n H(+)(out). NDH shuttles electrons from NAD(P)H:plastoquinone, via FMN and iron-sulfur (Fe-S) centers, to quinones in the photosynthetic chain and possibly in a chloroplast respiratory chain. The immediate electron acceptor for the enzyme in this species is believed to be plastoquinone. Couples the redox reaction to proton translocation, and thus conserves the redox energy in a proton gradient. The chain is NAD(P)H-quinone oxidoreductase subunit K, chloroplastic from Anthoceros angustus (Hornwort).